Reading from the N-terminus, the 133-residue chain is uncharacterized protein (133 aa).

A helical membrane pass occupies residues 11-31; that stretch reads YFLISVFLIFIVSGITYFYST.

Its subcellular location is the membrane. This is an uncharacterized protein from Borreliella burgdorferi (strain ATCC 35210 / DSM 4680 / CIP 102532 / B31) (Borrelia burgdorferi).